An 822-amino-acid chain; its full sequence is Dextranase (822 aa).

A signal peptide spans Met1–Ser38. Disordered regions lie at residues Glu607 to Leu669 and Glu683 to Ser788. The segment covering Asn619–Thr636 has biased composition (low complexity). Positions Ser693 to Asp705 are enriched in polar residues. The span at Ser706–Ser761 shows a compositional bias: low complexity. Polar residues predominate over residues Leu771–Ser788.

This sequence belongs to the glycosyl hydrolase 66 family.

The catalysed reaction is Endohydrolysis of (1-&gt;6)-alpha-D-glucosidic linkages in dextran.. This chain is Dextranase (dex), found in Streptococcus salivarius.